Consider the following 502-residue polypeptide: Rab11 family-interacting protein 4B (502 aa).

Disordered regions lie at residues 1 to 49 and 71 to 98; these read MSIQ…EEGI and SALS…TTSS. Over residues 15–29 the composition is skewed to basic and acidic residues; that stretch reads EEGRGVERDSDRDSA. Residues 71-80 show a composition bias toward polar residues; that stretch reads SALSSASLNE. Acidic residues predominate over residues 81–93; it reads EQFEDYGEGEDGD. A coiled-coil region spans residues 228–482; the sequence is DVKTKLKQEN…EEINLRLRQY (255 aa). Positions 439–501 constitute an FIP-RBD domain; sequence EAKNLFATQT…DHNPSILEIK (63 aa).

As to quaternary structure, homodimer. Forms a complex with Rab11 (rab11a or rab11b) and arf6.

It is found in the recycling endosome membrane. It localises to the cleavage furrow. Its subcellular location is the midbody. The protein resides in the cytoplasmic vesicle. Acts as a regulator of endocytic traffic by participating in membrane delivery. Required for the abscission step in cytokinesis, possibly by acting as an 'address tag' delivering recycling endosome membranes to the cleavage furrow during late cytokinesis. This is Rab11 family-interacting protein 4B (rab11fip4b) from Danio rerio (Zebrafish).